Reading from the N-terminus, the 1586-residue chain is Pentafunctional AROM polypeptide (1586 aa).

The segment at methionine 1–asparagine 384 is 3-dehydroquinate synthase. Residues aspartate 44 to asparagine 46, glutamate 81 to lysine 84, glycine 114 to valine 116, and aspartate 119 each bind NAD(+). A 7-phospho-2-dehydro-3-deoxy-D-arabino-heptonate-binding site is contributed by arginine 130. Threonine 139–threonine 140 provides a ligand contact to NAD(+). 7-phospho-2-dehydro-3-deoxy-D-arabino-heptonate-binding residues include aspartate 146 and lysine 152. Lysine 161 provides a ligand contact to NAD(+). Residue asparagine 162 participates in 7-phospho-2-dehydro-3-deoxy-D-arabino-heptonate binding. Residues phenylalanine 179–threonine 182 and asparagine 190 contribute to the NAD(+) site. Residue glutamate 194 participates in Zn(2+) binding. Residues glutamate 194–lysine 197 and lysine 250 contribute to the 7-phospho-2-dehydro-3-deoxy-D-arabino-heptonate site. The active-site Proton acceptor; for 3-dehydroquinate synthase activity is glutamate 260. 7-phospho-2-dehydro-3-deoxy-D-arabino-heptonate is bound by residues arginine 264–asparagine 268 and histidine 271. Histidine 271 serves as a coordination point for Zn(2+). Residue histidine 275 is the Proton acceptor; for 3-dehydroquinate synthase activity of the active site. Histidine 287 and lysine 356 together coordinate 7-phospho-2-dehydro-3-deoxy-D-arabino-heptonate. Histidine 287 contributes to the Zn(2+) binding site. Residues valine 397 to valine 842 are EPSP synthase. The active-site For EPSP synthase activity is the cysteine 824. Positions serine 864 to serine 1056 are shikimate kinase. Glycine 871–threonine 878 serves as a coordination point for ATP. Residues leucine 1057–glutamate 1277 form a 3-dehydroquinase region. Histidine 1180 (proton acceptor; for 3-dehydroquinate dehydratase activity) is an active-site residue. Lysine 1208 (schiff-base intermediate with substrate; for 3-dehydroquinate dehydratase activity) is an active-site residue. Residues alanine 1290–phenylalanine 1586 are shikimate dehydrogenase.

In the N-terminal section; belongs to the sugar phosphate cyclases superfamily. Dehydroquinate synthase family. It in the 2nd section; belongs to the EPSP synthase family. The protein in the 3rd section; belongs to the shikimate kinase family. This sequence in the 4th section; belongs to the type-I 3-dehydroquinase family. In the C-terminal section; belongs to the shikimate dehydrogenase family. As to quaternary structure, homodimer. Zn(2+) is required as a cofactor.

The protein resides in the cytoplasm. It carries out the reaction 7-phospho-2-dehydro-3-deoxy-D-arabino-heptonate = 3-dehydroquinate + phosphate. It catalyses the reaction 3-dehydroquinate = 3-dehydroshikimate + H2O. The catalysed reaction is shikimate + NADP(+) = 3-dehydroshikimate + NADPH + H(+). The enzyme catalyses shikimate + ATP = 3-phosphoshikimate + ADP + H(+). It carries out the reaction 3-phosphoshikimate + phosphoenolpyruvate = 5-O-(1-carboxyvinyl)-3-phosphoshikimate + phosphate. It participates in metabolic intermediate biosynthesis; chorismate biosynthesis; chorismate from D-erythrose 4-phosphate and phosphoenolpyruvate: step 2/7. It functions in the pathway metabolic intermediate biosynthesis; chorismate biosynthesis; chorismate from D-erythrose 4-phosphate and phosphoenolpyruvate: step 3/7. Its pathway is metabolic intermediate biosynthesis; chorismate biosynthesis; chorismate from D-erythrose 4-phosphate and phosphoenolpyruvate: step 4/7. The protein operates within metabolic intermediate biosynthesis; chorismate biosynthesis; chorismate from D-erythrose 4-phosphate and phosphoenolpyruvate: step 5/7. It participates in metabolic intermediate biosynthesis; chorismate biosynthesis; chorismate from D-erythrose 4-phosphate and phosphoenolpyruvate: step 6/7. In terms of biological role, the AROM polypeptide catalyzes 5 consecutive enzymatic reactions in prechorismate polyaromatic amino acid biosynthesis. The protein is Pentafunctional AROM polypeptide of Penicillium rubens (strain ATCC 28089 / DSM 1075 / NRRL 1951 / Wisconsin 54-1255) (Penicillium chrysogenum).